Here is an 835-residue protein sequence, read N- to C-terminus: Serine/threonine-protein kinase TNNI3K (835 aa).

Residues 21-51 (SESYVITIERLEDDLQIKEKELTELRNIFGS) are a coiled coil. ANK repeat units follow at residues 66–96 (NGLS…RPSR), 100–129 (NGFT…DIQQ), 133–162 (GGLT…NVNI), 166–195 (VFFT…DVNV), 199–228 (VGDR…KADV), 234–263 (EDHV…EVQP), 269–298 (YGDT…TESL), 304–335 (FSET…NINH), 339–368 (DGHT…DMNL), and 381–410 (DEQT…PQDE). The 261-residue stretch at 463-723 (IEFHEIIGSG…EVVMKLEECL (261 aa)) folds into the Protein kinase domain. ATP is bound by residues 469-477 (IGSGSFGKV) and K490. Residue D588 is the Proton acceptor of the active site. Low complexity predominate over residues 732–746 (ASSNSSGSLSPSSSS). Residues 732–751 (ASSNSSGSLSPSSSSDCLVN) are disordered.

It belongs to the protein kinase superfamily. TKL Ser/Thr protein kinase family. MAP kinase kinase kinase subfamily. In terms of assembly, interacts with TNNI3, ACTC1, ACTA1, MYBPC3, AIP, FABP3 and HADHB. Requires Mg(2+) as cofactor. Post-translationally, autophosphorylated. In terms of tissue distribution, highly expressed in both adult and fetal heart.

Its subcellular location is the nucleus. The protein localises to the cytoplasm. The enzyme catalyses L-seryl-[protein] + ATP = O-phospho-L-seryl-[protein] + ADP + H(+). The catalysed reaction is L-threonyl-[protein] + ATP = O-phospho-L-threonyl-[protein] + ADP + H(+). In terms of biological role, may play a role in cardiac physiology. This chain is Serine/threonine-protein kinase TNNI3K, found in Homo sapiens (Human).